The primary structure comprises 422 residues: UDP-N-acetylglucosamine 1-carboxyvinyltransferase (422 aa).

23–24 is a phosphoenolpyruvate binding site; that stretch reads KN. Position 92 (R92) interacts with UDP-N-acetyl-alpha-D-glucosamine. The Proton donor role is filled by C116. 2-(S-cysteinyl)pyruvic acid O-phosphothioketal is present on C116. Residues 121 to 125, 161 to 165, D306, and I328 each bind UDP-N-acetyl-alpha-D-glucosamine; these read RPVDL and KVSVG.

The protein belongs to the EPSP synthase family. MurA subfamily.

The protein resides in the cytoplasm. The catalysed reaction is phosphoenolpyruvate + UDP-N-acetyl-alpha-D-glucosamine = UDP-N-acetyl-3-O-(1-carboxyvinyl)-alpha-D-glucosamine + phosphate. The protein operates within cell wall biogenesis; peptidoglycan biosynthesis. Functionally, cell wall formation. Adds enolpyruvyl to UDP-N-acetylglucosamine. The protein is UDP-N-acetylglucosamine 1-carboxyvinyltransferase of Aliivibrio fischeri (strain MJ11) (Vibrio fischeri).